A 375-amino-acid chain; its full sequence is Queuine tRNA-ribosyltransferase (375 aa).

D94 functions as the Proton acceptor in the catalytic mechanism. Residues 94-98 (DSGGF), D148, Q191, and G218 contribute to the substrate site. The segment at 249–255 (GVGSPDD) is RNA binding. Catalysis depends on D268, which acts as the Nucleophile. The tract at residues 273 to 277 (TRIAR) is RNA binding; important for wobble base 34 recognition. Residues C306, C308, C311, and H337 each contribute to the Zn(2+) site.

The protein belongs to the queuine tRNA-ribosyltransferase family. Homodimer. Within each dimer, one monomer is responsible for RNA recognition and catalysis, while the other monomer binds to the replacement base PreQ1. Zn(2+) is required as a cofactor.

The catalysed reaction is 7-aminomethyl-7-carbaguanine + guanosine(34) in tRNA = 7-aminomethyl-7-carbaguanosine(34) in tRNA + guanine. It functions in the pathway tRNA modification; tRNA-queuosine biosynthesis. Catalyzes the base-exchange of a guanine (G) residue with the queuine precursor 7-aminomethyl-7-deazaguanine (PreQ1) at position 34 (anticodon wobble position) in tRNAs with GU(N) anticodons (tRNA-Asp, -Asn, -His and -Tyr). Catalysis occurs through a double-displacement mechanism. The nucleophile active site attacks the C1' of nucleotide 34 to detach the guanine base from the RNA, forming a covalent enzyme-RNA intermediate. The proton acceptor active site deprotonates the incoming PreQ1, allowing a nucleophilic attack on the C1' of the ribose to form the product. After dissociation, two additional enzymatic reactions on the tRNA convert PreQ1 to queuine (Q), resulting in the hypermodified nucleoside queuosine (7-(((4,5-cis-dihydroxy-2-cyclopenten-1-yl)amino)methyl)-7-deazaguanosine). In Thermoanaerobacter pseudethanolicus (strain ATCC 33223 / 39E) (Clostridium thermohydrosulfuricum), this protein is Queuine tRNA-ribosyltransferase.